The following is a 244-amino-acid chain: Futalosine hydrolase (244 aa).

This sequence belongs to the PNP/UDP phosphorylase family. Futalosine hydrolase subfamily.

It catalyses the reaction futalosine + H2O = dehypoxanthine futalosine + hypoxanthine. It functions in the pathway quinol/quinone metabolism; menaquinone biosynthesis. Functionally, catalyzes the hydrolysis of futalosine (FL) to dehypoxanthine futalosine (DHFL) and hypoxanthine, a step in the biosynthesis of menaquinone (MK, vitamin K2). Cannot directly use aminodeoxyfutalosine (AFL) as a substrate. This Acidothermus cellulolyticus (strain ATCC 43068 / DSM 8971 / 11B) protein is Futalosine hydrolase.